Consider the following 358-residue polypeptide: Adenosine deaminase (358 aa).

Residues His14 and His16 each contribute to the Zn(2+) site. Positions 16, 18, and 183 each coordinate substrate. His212 is a Zn(2+) binding site. The Proton donor role is filled by Glu215. Asp294 contacts Zn(2+). Position 295 (Asp295) interacts with substrate.

It belongs to the metallo-dependent hydrolases superfamily. Adenosine and AMP deaminases family. It depends on Zn(2+) as a cofactor.

It localises to the cell membrane. The protein localises to the cell junction. It is found in the cytoplasmic vesicle lumen. Its subcellular location is the cytoplasm. The protein resides in the lysosome. It catalyses the reaction adenosine + H2O + H(+) = inosine + NH4(+). The enzyme catalyses 2'-deoxyadenosine + H2O + H(+) = 2'-deoxyinosine + NH4(+). In terms of biological role, catalyzes the hydrolytic deamination of adenosine and 2-deoxyadenosine. Plays an important role in purine metabolism and in adenosine homeostasis. Modulates signaling by extracellular adenosine, and so contributes indirectly to cellular signaling events. May act as a positive regulator of T-cell coactivation. The polypeptide is Adenosine deaminase (ada) (Xenopus tropicalis (Western clawed frog)).